Here is a 768-residue protein sequence, read N- to C-terminus: Histone-lysine N-methyltransferase, H3 lysine-36 specific (768 aa).

The AWS domain occupies A45–K90. The 118-residue stretch at A92–N209 folds into the SET domain. Residues E216–G232 enclose the Post-SET domain. The span at K411 to D452 shows a compositional bias: basic and acidic residues. Disordered stretches follow at residues K411 to Q508, K533 to Q610, and V680 to E768. Residues N453–P469 are compositionally biased toward polar residues. The WW domain maps to R501 to A534. Composition is skewed to basic and acidic residues over residues N555–E568, K682–E734, and T755–E768.

It belongs to the class V-like SAM-binding methyltransferase superfamily. Histone-lysine methyltransferase family. SET2 subfamily.

The protein resides in the nucleus. It localises to the chromosome. The catalysed reaction is L-lysyl(36)-[histone H3] + 3 S-adenosyl-L-methionine = N(6),N(6),N(6)-trimethyl-L-lysyl(36)-[histone H3] + 3 S-adenosyl-L-homocysteine + 3 H(+). Functionally, histone methyltransferase that trimethylates histone H3 'Lys-36' forming H3K36me3. Involved in transcription elongation as well as in transcription repression. The polypeptide is Histone-lysine N-methyltransferase, H3 lysine-36 specific (set-2) (Yarrowia lipolytica (strain CLIB 122 / E 150) (Yeast)).